The following is a 185-amino-acid chain: Ribosome-recycling factor (185 aa).

The protein belongs to the RRF family.

Its subcellular location is the cytoplasm. Responsible for the release of ribosomes from messenger RNA at the termination of protein biosynthesis. May increase the efficiency of translation by recycling ribosomes from one round of translation to another. The sequence is that of Ribosome-recycling factor from Legionella pneumophila (strain Corby).